Consider the following 210-residue polypeptide: Chaperone protein TorD (210 aa).

This sequence belongs to the TorD/DmsD family. TorD subfamily.

It localises to the cytoplasm. Involved in the biogenesis of TorA. Acts on TorA before the insertion of the molybdenum cofactor and, as a result, probably favors a conformation of the apoenzyme that is competent for acquiring the cofactor. The chain is Chaperone protein TorD from Salmonella agona (strain SL483).